Here is a 364-residue protein sequence, read N- to C-terminus: UDP-N-acetylglucosamine--N-acetylmuramyl-(pentapeptide) pyrophosphoryl-undecaprenol N-acetylglucosamine transferase (364 aa).

UDP-N-acetyl-alpha-D-glucosamine is bound by residues 10–12, asparagine 124, arginine 166, serine 196, and glutamine 297; that span reads TGG.

Belongs to the glycosyltransferase 28 family. MurG subfamily.

It is found in the cell membrane. It carries out the reaction di-trans,octa-cis-undecaprenyl diphospho-N-acetyl-alpha-D-muramoyl-L-alanyl-D-glutamyl-meso-2,6-diaminopimeloyl-D-alanyl-D-alanine + UDP-N-acetyl-alpha-D-glucosamine = di-trans,octa-cis-undecaprenyl diphospho-[N-acetyl-alpha-D-glucosaminyl-(1-&gt;4)]-N-acetyl-alpha-D-muramoyl-L-alanyl-D-glutamyl-meso-2,6-diaminopimeloyl-D-alanyl-D-alanine + UDP + H(+). It participates in cell wall biogenesis; peptidoglycan biosynthesis. Functionally, cell wall formation. Catalyzes the transfer of a GlcNAc subunit on undecaprenyl-pyrophosphoryl-MurNAc-pentapeptide (lipid intermediate I) to form undecaprenyl-pyrophosphoryl-MurNAc-(pentapeptide)GlcNAc (lipid intermediate II). The chain is UDP-N-acetylglucosamine--N-acetylmuramyl-(pentapeptide) pyrophosphoryl-undecaprenol N-acetylglucosamine transferase from Thermoanaerobacter pseudethanolicus (strain ATCC 33223 / 39E) (Clostridium thermohydrosulfuricum).